A 494-amino-acid polypeptide reads, in one-letter code: Glycerol kinase (494 aa).

An ADP-binding site is contributed by Thr13. Residues Thr13, Thr14, and Ser15 each contribute to the ATP site. Residue Thr13 coordinates sn-glycerol 3-phosphate. Arg17 contributes to the ADP binding site. Residues Arg83, Glu84, Tyr135, and Asp244 each contribute to the sn-glycerol 3-phosphate site. 5 residues coordinate glycerol: Arg83, Glu84, Tyr135, Asp244, and Gln245. Positions 266 and 309 each coordinate ADP. Residues Thr266, Gly309, Gln313, and Gly410 each contribute to the ATP site. 2 residues coordinate ADP: Gly410 and Asn414.

The protein belongs to the FGGY kinase family.

The enzyme catalyses glycerol + ATP = sn-glycerol 3-phosphate + ADP + H(+). It participates in polyol metabolism; glycerol degradation via glycerol kinase pathway; sn-glycerol 3-phosphate from glycerol: step 1/1. With respect to regulation, inhibited by fructose 1,6-bisphosphate (FBP). Its function is as follows. Key enzyme in the regulation of glycerol uptake and metabolism. Catalyzes the phosphorylation of glycerol to yield sn-glycerol 3-phosphate. This Shewanella baltica (strain OS195) protein is Glycerol kinase.